A 69-amino-acid polypeptide reads, in one-letter code: UPF0337 protein XAC4007 (69 aa).

It belongs to the UPF0337 (CsbD) family.

The sequence is that of UPF0337 protein XAC4007 from Xanthomonas axonopodis pv. citri (strain 306).